A 1344-amino-acid polypeptide reads, in one-letter code: Centrosomal P4.1-associated protein (1344 aa).

2 disordered regions span residues Ser67 to Leu123 and Pro187 to Val225. A compositionally biased stretch (polar residues) spans Ser211–Val225. Residue Ser248 is modified to Phosphoserine. Residues Gln257–Lys300 form a disordered region. 2 stretches are compositionally biased toward basic and acidic residues: residues Ala259 to Pro271 and Arg282 to Asn297. Residue Ser304 is modified to Phosphoserine. The segment at Val307–Lys382 is alpha/beta-tubulin binding. Disordered regions lie at residues Gln347–His407 and Thr425–Asp470. Positions Leu388–Gln398 are enriched in polar residues. Ser528 is subject to Phosphoserine. A phosphoserine; by PLK2 mark is found at Ser577 and Ser583. Disordered regions lie at residues Arg600–Ser626 and Thr672–Ala735. A compositionally biased stretch (basic and acidic residues) spans Val709–Ser720. Ser748 carries the phosphoserine modification. Residues Gln887–Met1344 form an interaction with STIL region. The tract at residues Gln1105 to Glu1133 is disordered.

It belongs to the TCP10 family. Forms homodimers. Associates with microtubules plus ends; binds to beta-tubulin subunits exposed on microtubule outer surface at its distal tip; also associates with microtubule lattice. Associated with the gamma-tubulin complex. Interacts with the head domain of EPB41. Interacts with LYST. Interacts with CEP152 (via C-terminus). Interacts with STIL. Forms a complex with STIL and SASS6. Phosphorylation at Ser-577 and Ser-583 by PLK2 is required for procentriole formation and centriole elongation. Phosphorylation by PLK2 oscillates during the cell cycle: it increases at G1/S transition and decreases during the exit from mitosis. Phosphorylation at Ser-583 is also mediated by PLK4 but is not a critical step in PLK4 function in procentriole assembly.

It localises to the cytoplasm. Its subcellular location is the cytoskeleton. It is found in the microtubule organizing center. The protein localises to the centrosome. The protein resides in the centriole. In terms of biological role, plays an important role in cell division and centrosome function by participating in centriole duplication. Inhibits microtubule nucleation from the centrosome. Involved in the regulation of slow processive growth of centriolar microtubules. Acts as microtubule plus-end tracking protein that stabilizes centriolar microtubules and inhibits microtubule polymerization and extension from the distal ends of centrioles. Required for centriole elongation and for STIL-mediated centriole amplification. Required for the recruitment of CEP295 to the proximal end of new-born centrioles at the centriolar microtubule wall during early S phase in a PLK4-dependent manner. May be involved in the control of centriolar-microtubule growth by acting as a regulator of tubulin release. The sequence is that of Centrosomal P4.1-associated protein (Cpap) from Mus musculus (Mouse).